The primary structure comprises 852 residues: Alanine--tRNA ligase (852 aa).

Zn(2+)-binding residues include His554, His558, Cys656, and His660.

The protein belongs to the class-II aminoacyl-tRNA synthetase family. The cofactor is Zn(2+).

It is found in the cytoplasm. It catalyses the reaction tRNA(Ala) + L-alanine + ATP = L-alanyl-tRNA(Ala) + AMP + diphosphate. In terms of biological role, catalyzes the attachment of alanine to tRNA(Ala) in a two-step reaction: alanine is first activated by ATP to form Ala-AMP and then transferred to the acceptor end of tRNA(Ala). Also edits incorrectly charged Ser-tRNA(Ala) and Gly-tRNA(Ala) via its editing domain. This Campylobacter concisus (strain 13826) protein is Alanine--tRNA ligase.